Consider the following 267-residue polypeptide: Tryptophan synthase alpha chain (267 aa).

Active-site proton acceptor residues include E43 and D54.

This sequence belongs to the TrpA family. Tetramer of two alpha and two beta chains.

It carries out the reaction (1S,2R)-1-C-(indol-3-yl)glycerol 3-phosphate + L-serine = D-glyceraldehyde 3-phosphate + L-tryptophan + H2O. It participates in amino-acid biosynthesis; L-tryptophan biosynthesis; L-tryptophan from chorismate: step 5/5. Functionally, the alpha subunit is responsible for the aldol cleavage of indoleglycerol phosphate to indole and glyceraldehyde 3-phosphate. The protein is Tryptophan synthase alpha chain of Bacillus subtilis (strain 168).